The primary structure comprises 328 residues: Serine/threonine protein kinase RdoA (328 aa).

Asp201 (proton acceptor) is an active-site residue. Mg(2+) is bound by residues Asn206 and Asp217. Residue Asp217 is part of the active site.

The protein belongs to the SrkA/RdoA protein kinase family. Monomer. Mg(2+) serves as cofactor.

It is found in the cytoplasm. It catalyses the reaction L-seryl-[protein] + ATP = O-phospho-L-seryl-[protein] + ADP + H(+). The catalysed reaction is L-threonyl-[protein] + ATP = O-phospho-L-threonyl-[protein] + ADP + H(+). Functionally, a protein kinase that (auto)phosphorylates on Ser and Thr residues, probably involved in the extracytoplasmic stress response. Probably acts to suppress the effects of stress linked to accumulation of reactive oxygen species. This is Serine/threonine protein kinase RdoA from Salmonella typhimurium (strain LT2 / SGSC1412 / ATCC 700720).